The primary structure comprises 62 residues: Large ribosomal subunit protein eL24 (62 aa).

4 residues coordinate Zn(2+): Cys-7, Cys-10, Cys-33, and Cys-37. The segment at Cys-7–Cys-37 adopts a C4-type zinc-finger fold.

This sequence belongs to the eukaryotic ribosomal protein eL24 family. As to quaternary structure, part of the 50S ribosomal subunit. Forms a cluster with proteins L3 and L14. The cofactor is Zn(2+).

Binds to the 23S rRNA. This chain is Large ribosomal subunit protein eL24, found in Halobacterium salinarum (strain ATCC 29341 / DSM 671 / R1).